Consider the following 304-residue polypeptide: Proteasome subunit beta (304 aa).

A propeptide spans M1 to G65 (removed in mature form; by autocatalysis). T66 (nucleophile) is an active-site residue.

The protein belongs to the peptidase T1B family. In terms of assembly, the 20S proteasome core is composed of 14 alpha and 14 beta subunits that assemble into four stacked heptameric rings, resulting in a barrel-shaped structure. The two inner rings, each composed of seven catalytic beta subunits, are sandwiched by two outer rings, each composed of seven alpha subunits. The catalytic chamber with the active sites is on the inside of the barrel. Has a gated structure, the ends of the cylinder being occluded by the N-termini of the alpha-subunits. Is capped by the proteasome-associated ATPase, ARC.

The protein resides in the cytoplasm. The enzyme catalyses Cleavage of peptide bonds with very broad specificity.. It functions in the pathway protein degradation; proteasomal Pup-dependent pathway. Its activity is regulated as follows. The formation of the proteasomal ATPase ARC-20S proteasome complex, likely via the docking of the C-termini of ARC into the intersubunit pockets in the alpha-rings, may trigger opening of the gate for substrate entry. Interconversion between the open-gate and close-gate conformations leads to a dynamic regulation of the 20S proteasome proteolysis activity. Functionally, component of the proteasome core, a large protease complex with broad specificity involved in protein degradation. This Mycobacterium sp. (strain JLS) protein is Proteasome subunit beta.